Reading from the N-terminus, the 401-residue chain is Imidazolonepropionase (401 aa).

Positions 70 and 72 each coordinate Fe(3+). Zn(2+) contacts are provided by His-70 and His-72. 3 residues coordinate 4-imidazolone-5-propanoate: Arg-79, Tyr-142, and His-175. Residue Tyr-142 coordinates N-formimidoyl-L-glutamate. Position 238 (His-238) interacts with Fe(3+). Residue His-238 participates in Zn(2+) binding. 4-imidazolone-5-propanoate is bound at residue Gln-241. Asp-313 is a binding site for Fe(3+). Position 313 (Asp-313) interacts with Zn(2+). Positions 315 and 317 each coordinate N-formimidoyl-L-glutamate. A 4-imidazolone-5-propanoate-binding site is contributed by Thr-318.

It belongs to the metallo-dependent hydrolases superfamily. HutI family. Requires Zn(2+) as cofactor. Fe(3+) serves as cofactor.

It is found in the cytoplasm. It catalyses the reaction 4-imidazolone-5-propanoate + H2O = N-formimidoyl-L-glutamate. Its pathway is amino-acid degradation; L-histidine degradation into L-glutamate; N-formimidoyl-L-glutamate from L-histidine: step 3/3. In terms of biological role, catalyzes the hydrolytic cleavage of the carbon-nitrogen bond in imidazolone-5-propanoate to yield N-formimidoyl-L-glutamate. It is the third step in the universal histidine degradation pathway. The sequence is that of Imidazolonepropionase from Xanthomonas euvesicatoria pv. vesicatoria (strain 85-10) (Xanthomonas campestris pv. vesicatoria).